Reading from the N-terminus, the 282-residue chain is Insulin-like growth factor-binding protein 7 (282 aa).

A signal peptide spans 1 to 26 (MERPSLRALLLGAAGLLLLLLPLSSS). Positions 28–114 (SSDTCGPCEP…PGVSGVCVCK (87 aa)) constitute an IGFBP N-terminal domain. Intrachain disulfides connect C32-C57, C35-C59, C40-C60, C48-C63, C71-C87, C81-C111, and C120-C156. Residues 105-158 (PGVSGVCVCKSRYPVCGSDGTTYPSGCQLRAASQRAESRGEKAITQVSKGTCEQ) enclose the Kazal-like domain. An Ig-like C2-type domain is found at 160 to 264 (PSIVTPPKDI…GQASASAKIT (105 aa)). An N-linked (GlcNAc...) asparagine glycan is attached at N171. C181 and C248 are joined by a disulfide. The residue at position 239 (S239) is a Phosphoserine; by FAM20C.

In terms of assembly, may interact with VPS24/CHMP3; the relevance of such interaction however remains unclear. Interacts with CD93; this interaction plays a role in endothelial cells angiogenesis. Post-translationally, N-glycosylated.

The protein resides in the secreted. Binds IGF1 and IGF2 with a relatively low affinity. Stimulates prostacyclin (PGI2) production. Stimulates cell adhesion. Acts as a ligand for CD93 to play a role in angiogenesis. The sequence is that of Insulin-like growth factor-binding protein 7 (IGFBP7) from Homo sapiens (Human).